Here is a 369-residue protein sequence, read N- to C-terminus: Developmentally-regulated G-protein 3 (369 aa).

An OBG-type G domain is found at 66 to 291; it reads SRVGLVGFPS…LLDKIWEYLD (226 aa). Residues 72-79, 118-122, and 249-252 each bind GTP; these read GFPSVGKS, DLPGI, and NKID. A TGS domain is found at 291–367; that stretch reads DLTRIYTKPK…EDEDVVQIVK (77 aa).

It belongs to the TRAFAC class OBG-HflX-like GTPase superfamily. OBG GTPase family.

Functionally, binds GDP and GTP, and has low GTPase activity in vitro. This Arabidopsis thaliana (Mouse-ear cress) protein is Developmentally-regulated G-protein 3 (DRG3).